A 449-amino-acid polypeptide reads, in one-letter code: Probable ubiquitin carboxyl-terminal hydrolase 8 (449 aa).

The segment at 6–113 adopts a UBP-type zinc-finger fold; that stretch reads EGCQHLKLKP…FKIKNIKAWQ (108 aa). Zn(2+) is bound by residues cysteine 8, histidine 10, cysteine 38, cysteine 41, cysteine 51, cysteine 54, cysteine 59, histidine 64, histidine 68, histidine 74, cysteine 87, and cysteine 90. In terms of domain architecture, USP spans 145–435; that stretch reads RGIQNLGATC…QAYLLFYHER (291 aa). Residue cysteine 154 is the Nucleophile of the active site. Zn(2+) is bound by residues histidine 178, cysteine 183, cysteine 188, cysteine 191, histidine 246, cysteine 257, cysteine 259, histidine 262, cysteine 275, cysteine 278, cysteine 317, and cysteine 320. Histidine 395 functions as the Proton acceptor in the catalytic mechanism.

Belongs to the peptidase C19 family. UBP8 subfamily. In terms of assembly, component of the 1.8 MDa SAGA (Spt-Ada-Gcn5 acetyltransferase) complex, which is composed of 19 subunits tra1, spt7, taf5, ngg1/ada3, sgf73, spt20, spt8, taf12, taf6, hfi1/ada1, ubp8, gcn5, ada2, spt3, sgf29, taf10, taf9, sgf11 and sus1. The SAGA complex is composed of 4 modules, namely the HAT (histone acetyltransferase) module (gcn5, ada2, ngg1/ada3 and sgf29), the DUB (deubiquitinating) module (ubp8, sgf11, sgf73 and sus1), the core or TAF (TBP-associated factor) module (taf5, taf6, taf9, taf10 and taf12), and the Tra1 or SPT (Suppressor of Ty) module (tra1, hfi1/ada1, spt3, spt7, spt8 and spt20). The Tra1/SPT module binds activators, the core module recruits TBP (TATA-binding protein), the HAT module contains the histone H3 acetyltransferase gcn5, and the DUB module comprises the histone H2B deubiquitinase ubp8.

It localises to the nucleus. Its subcellular location is the nucleoplasm. It catalyses the reaction Thiol-dependent hydrolysis of ester, thioester, amide, peptide and isopeptide bonds formed by the C-terminal Gly of ubiquitin (a 76-residue protein attached to proteins as an intracellular targeting signal).. Its function is as follows. Histone deubiquitinating enzyme component of the transcription coactivator SAGA complex. SAGA acts as a general cofactor required for essentially all RNA polymerase II transcription. At the promoters, SAGA is required for transcription pre-initiation complex (PIC) recruitment. It influences RNA polymerase II transcriptional activity through different activities such as TBP interaction (via core/TAF module) and promoter selectivity, interaction with transcription activators (via Tra1/SPT module), and chromatin modification through histone acetylation (via HAT module) and deubiquitination (via DUB module). SAGA preferentially acetylates histones H3 (to form H3K9ac, H3K14ac, H3K18ac and H3K23ac) and H2B and deubiquitinates histone H2B. SAGA interacts with DNA via upstream activating sequences (UASs). Within the DUB module, the correctly positioned zinc finger domains of sgf11 and sgf73 are both required to fully activate the ubiquitin hydrolase ubp8. The DUB module is also linked to the splicing efficiency of many transcripts. The polypeptide is Probable ubiquitin carboxyl-terminal hydrolase 8 (ubp8) (Schizosaccharomyces pombe (strain 972 / ATCC 24843) (Fission yeast)).